Reading from the N-terminus, the 110-residue chain is Protein RnfH (110 aa).

A disordered region spans residues 86 to 110; sequence RQRRVEKSRQEGSVEGRKWLPKDSR. The segment covering 88–110 has biased composition (basic and acidic residues); sequence RRVEKSRQEGSVEGRKWLPKDSR.

The protein belongs to the UPF0125 (RnfH) family.

This is Protein RnfH from Paraburkholderia phymatum (strain DSM 17167 / CIP 108236 / LMG 21445 / STM815) (Burkholderia phymatum).